A 346-amino-acid polypeptide reads, in one-letter code: Probable dual-specificity RNA methyltransferase RlmN (346 aa).

Glu-90 functions as the Proton acceptor in the catalytic mechanism. In terms of domain architecture, Radical SAM core spans 96-330; sequence TRDRLTVCVS…VSVRASRGLD (235 aa). Cysteines 103 and 335 form a disulfide. Cys-110, Cys-114, and Cys-117 together coordinate [4Fe-4S] cluster. S-adenosyl-L-methionine is bound by residues 157–158, Ser-187, 216–218, and Asn-292; these read GE and SLH. The active-site S-methylcysteine intermediate is the Cys-335.

It belongs to the radical SAM superfamily. RlmN family. Requires [4Fe-4S] cluster as cofactor.

It localises to the cytoplasm. The catalysed reaction is adenosine(2503) in 23S rRNA + 2 reduced [2Fe-2S]-[ferredoxin] + 2 S-adenosyl-L-methionine = 2-methyladenosine(2503) in 23S rRNA + 5'-deoxyadenosine + L-methionine + 2 oxidized [2Fe-2S]-[ferredoxin] + S-adenosyl-L-homocysteine. The enzyme catalyses adenosine(37) in tRNA + 2 reduced [2Fe-2S]-[ferredoxin] + 2 S-adenosyl-L-methionine = 2-methyladenosine(37) in tRNA + 5'-deoxyadenosine + L-methionine + 2 oxidized [2Fe-2S]-[ferredoxin] + S-adenosyl-L-homocysteine. Specifically methylates position 2 of adenine 2503 in 23S rRNA and position 2 of adenine 37 in tRNAs. The protein is Probable dual-specificity RNA methyltransferase RlmN of Synechococcus sp. (strain RCC307).